A 261-amino-acid chain; its full sequence is Small ribosomal subunit protein eS4z (261 aa).

In terms of domain architecture, S4 RNA-binding spans 42–104 (LPLVLIIRNR…TNENFRLLYD (63 aa)).

Belongs to the eukaryotic ribosomal protein eS4 family.

The protein resides in the cytoplasm. The polypeptide is Small ribosomal subunit protein eS4z (RPS4A) (Arabidopsis thaliana (Mouse-ear cress)).